Here is a 537-residue protein sequence, read N- to C-terminus: Autophagy-related protein 18 (537 aa).

Residues 184 to 230 (SEYLDKGTEPLTDSSKAGADLNSVKASTETTISPGKEHSAGSGLNAT) are disordered. Polar residues predominate over residues 207-216 (VKASTETTIS). WD repeat units lie at residues 257 to 297 (AHKG…KVYQ) and 302 to 341 (TYPTRIYSLNFSDDNEFLAASSSNKTVHIFKLGKPNAENS). The L/FRRG motif signature appears at 298–302 (FRRGT). Over residues 338-347 (AENSSAAATN) the composition is skewed to low complexity. The interval 338-411 (AENSSAAATN…RMIRKSSQNL (74 aa)) is disordered. The segment covering 348 to 369 (SDDDEGEADSDDGADDDGVGDS) has biased composition (acidic residues). The segment covering 374 to 386 (STVSIESFDNGSH) has biased composition (polar residues). Over residues 387-397 (QTREPIVDSSR) the composition is skewed to basic and acidic residues.

This sequence belongs to the WD repeat PROPPIN family. As to quaternary structure, component of the PI(3,5)P2 regulatory complex.

The protein resides in the preautophagosomal structure membrane. It is found in the vacuole membrane. The protein localises to the endosome membrane. In terms of biological role, the PI(3,5)P2 regulatory complex regulates both the synthesis and turnover of phosphatidylinositol 3,5-bisphosphate (PtdIns(3,5)P2). Necessary for proper vacuole morphology. Plays an important role in osmotically-induced vacuole fragmentation. Required for cytoplasm to vacuole transport (Cvt) vesicle formation, pexophagy and starvation-induced autophagy. Involved in correct ATG9 trafficking to the pre-autophagosomal structure. Might also be involved in premeiotic DNA replication. This is Autophagy-related protein 18 (ATG18) from Eremothecium gossypii (strain ATCC 10895 / CBS 109.51 / FGSC 9923 / NRRL Y-1056) (Yeast).